Here is a 349-residue protein sequence, read N- to C-terminus: MVTYKDAGVDIYKEDKVIRALASQIKFERTDAIKPADLKGHYAGAIEFGDYYLVLCTDGVGSKMVVAEMANKFDTVPIDMIAMNVNDAICIGAEPVALVDYMAVEDITEDIASQIGKGLNDGIKESNINLIGGETASLPNMIKGVDLAGTVLAVVKKDEIVSGKEVKPGDVIVGLRSSGIHSNGLSLARKVFFDITNLDVNSKLSHGKTVAEELLTPTKIYVKPVLEMIKQVNVKGLAHITGGGFRKLKRLNKDVCYKIDELPEILPIFKEIQNLGNVADQEMFKTFNMGIGFCVIVEKEDAEKIIEIANHHNIPAFVIGKIEDSVEIGGKTKRETVLVEYNNKKMIME.

The protein belongs to the AIR synthase family.

Its subcellular location is the cytoplasm. It catalyses the reaction 2-formamido-N(1)-(5-O-phospho-beta-D-ribosyl)acetamidine + ATP = 5-amino-1-(5-phospho-beta-D-ribosyl)imidazole + ADP + phosphate + H(+). The protein operates within purine metabolism; IMP biosynthesis via de novo pathway; 5-amino-1-(5-phospho-D-ribosyl)imidazole from N(2)-formyl-N(1)-(5-phospho-D-ribosyl)glycinamide: step 2/2. This chain is Phosphoribosylformylglycinamidine cyclo-ligase, found in Methanococcus maripaludis (strain C6 / ATCC BAA-1332).